Here is a 294-residue protein sequence, read N- to C-terminus: 33 kDa chaperonin (294 aa).

Disulfide bonds link Cys-230-Cys-232 and Cys-263-Cys-266.

This sequence belongs to the HSP33 family. Post-translationally, under oxidizing conditions two disulfide bonds are formed involving the reactive cysteines. Under reducing conditions zinc is bound to the reactive cysteines and the protein is inactive.

The protein resides in the cytoplasm. Redox regulated molecular chaperone. Protects both thermally unfolding and oxidatively damaged proteins from irreversible aggregation. Plays an important role in the bacterial defense system toward oxidative stress. The sequence is that of 33 kDa chaperonin from Chromobacterium violaceum (strain ATCC 12472 / DSM 30191 / JCM 1249 / CCUG 213 / NBRC 12614 / NCIMB 9131 / NCTC 9757 / MK).